A 397-amino-acid chain; its full sequence is Succinate--CoA ligase [ADP-forming] subunit beta (397 aa).

The ATP-grasp domain maps to 9–244 (KEIMKQYGIS…LTEEDPREVQ (236 aa)). ATP-binding positions include lysine 46, 53–55 (GRG), glutamate 99, leucine 102, and glutamate 107. Mg(2+)-binding residues include asparagine 199 and aspartate 213. Substrate contacts are provided by residues asparagine 264 and 321-323 (GIM).

Belongs to the succinate/malate CoA ligase beta subunit family. Heterotetramer of two alpha and two beta subunits. Requires Mg(2+) as cofactor.

It carries out the reaction succinate + ATP + CoA = succinyl-CoA + ADP + phosphate. The catalysed reaction is GTP + succinate + CoA = succinyl-CoA + GDP + phosphate. Its pathway is carbohydrate metabolism; tricarboxylic acid cycle; succinate from succinyl-CoA (ligase route): step 1/1. Its function is as follows. Succinyl-CoA synthetase functions in the citric acid cycle (TCA), coupling the hydrolysis of succinyl-CoA to the synthesis of either ATP or GTP and thus represents the only step of substrate-level phosphorylation in the TCA. The beta subunit provides nucleotide specificity of the enzyme and binds the substrate succinate, while the binding sites for coenzyme A and phosphate are found in the alpha subunit. The polypeptide is Succinate--CoA ligase [ADP-forming] subunit beta (Alkaliphilus metalliredigens (strain QYMF)).